We begin with the raw amino-acid sequence, 326 residues long: Putative HTH-type transcriptional regulatory protein MmarC7_1702 (326 aa).

One can recognise an HTH cro/C1-type domain in the interval 128-183; the sequence is LRETREKLKISVGELAEISRVSRKTIYKYEQNEANPSAEVAIKIEEYLDVPLIKGI. The H-T-H motif DNA-binding region spans 139 to 158; it reads VGELAEISRVSRKTIYKYEQ.

The chain is Putative HTH-type transcriptional regulatory protein MmarC7_1702 from Methanococcus maripaludis (strain C7 / ATCC BAA-1331).